Here is a 364-residue protein sequence, read N- to C-terminus: MAQQTPLYEQHTLCGARMVDFHGWMMPLHYGSQLDEHHAVRTDAGMFDVSHMTIVDLRGSRTREFLRYLLANDVAKLTKTGKALYSGMLNASGGVIDDLIVYYFTEDFFRLVVNSATREKDLSWITQHAEPYAIDITVRDDLSLIAVQGPNAQAKAATLFTEEQRKAVEGMKPFFGVQAGDLFIATTGYTGEAGYEIAMPNEKAADFWRALVESGVKPCGLGARDTLRLEAGMNLYGQEMDEGVSPLAANMGWTIAWEPADRDFIGREALEVQREKGTEQLVGLVMTEKGVLRNELPVRFTDAQGNQLEGVITSGTFSPTLGYSIALARVPAGIGETAIVQIRNREMPVKVTKPVFVRNGKAVA.

Belongs to the GcvT family. The glycine cleavage system is composed of four proteins: P, T, L and H.

The catalysed reaction is N(6)-[(R)-S(8)-aminomethyldihydrolipoyl]-L-lysyl-[protein] + (6S)-5,6,7,8-tetrahydrofolate = N(6)-[(R)-dihydrolipoyl]-L-lysyl-[protein] + (6R)-5,10-methylene-5,6,7,8-tetrahydrofolate + NH4(+). In terms of biological role, the glycine cleavage system catalyzes the degradation of glycine. The sequence is that of Aminomethyltransferase from Citrobacter koseri (strain ATCC BAA-895 / CDC 4225-83 / SGSC4696).